A 348-amino-acid polypeptide reads, in one-letter code: Fructose-1,6-bisphosphatase class 1 (348 aa).

4 residues coordinate Mg(2+): E92, D111, L113, and D114. Substrate-binding positions include 114–117 (DGSS) and N204. E276 serves as a coordination point for Mg(2+).

It belongs to the FBPase class 1 family. In terms of assembly, homotetramer. Mg(2+) serves as cofactor.

It is found in the cytoplasm. It carries out the reaction beta-D-fructose 1,6-bisphosphate + H2O = beta-D-fructose 6-phosphate + phosphate. It functions in the pathway carbohydrate biosynthesis; gluconeogenesis. This Methylorubrum extorquens (strain PA1) (Methylobacterium extorquens) protein is Fructose-1,6-bisphosphatase class 1.